A 102-amino-acid polypeptide reads, in one-letter code: Carboxysome shell protein CcmK3 (102 aa).

Residues 4–90 (AVGVIQTDGF…PPDNVETVMP (87 aa)) form the BMC domain.

Belongs to the bacterial microcompartments protein family. CcmK subfamily. Interacts stably with CcmK4, forming heterohexamers that can make dodecamers. Heterohexamers have a 1:2 CcmK3:CcmK4 stoichiometry. Upon expression in E.coli forms oligomers that could be dimers or trimers, but never hexamers; bulky residues in the pore region probably preclude the formation of homohexamers.

It localises to the carboxysome. A probably non-essential, minor shell protein of the carboxysome, a polyhedral inclusion where RuBisCO (ribulose bisphosphate carboxylase, rbcL-rbcS) is sequestered. Hexamers form sheets that form the facets of the polyhedral carboxysome. In PCC 7418 there are several CcmK paralogs with presumably functional differences. This subunit probably only makes heterohexamers with CcmK4. Heterohexamers can also make dodecamers, formation depends on buffer conditions. This Halothece sp. (strain PCC 7418) (Synechococcus sp. (strain PCC 7418)) protein is Carboxysome shell protein CcmK3.